An 82-amino-acid polypeptide reads, in one-letter code: Small ribosomal subunit protein uS17 (82 aa).

This sequence belongs to the universal ribosomal protein uS17 family. Part of the 30S ribosomal subunit.

Functionally, one of the primary rRNA binding proteins, it binds specifically to the 5'-end of 16S ribosomal RNA. This chain is Small ribosomal subunit protein uS17, found in Shewanella sediminis (strain HAW-EB3).